The primary structure comprises 519 residues: Histidine ammonia-lyase (519 aa).

A cross-link (5-imidazolinone (Ala-Gly)) is located at residues 146–148 (ASG). Position 147 is a 2,3-didehydroalanine (Ser) (Ser-147).

The protein belongs to the PAL/histidase family. In terms of processing, contains an active site 4-methylidene-imidazol-5-one (MIO), which is formed autocatalytically by cyclization and dehydration of residues Ala-Ser-Gly.

The protein resides in the cytoplasm. The enzyme catalyses L-histidine = trans-urocanate + NH4(+). The protein operates within amino-acid degradation; L-histidine degradation into L-glutamate; N-formimidoyl-L-glutamate from L-histidine: step 1/3. The chain is Histidine ammonia-lyase from Bradyrhizobium diazoefficiens (strain JCM 10833 / BCRC 13528 / IAM 13628 / NBRC 14792 / USDA 110).